We begin with the raw amino-acid sequence, 232 residues long: Orotidine 5'-phosphate decarboxylase (232 aa).

Residues Asp-16, Lys-38, 65–74, Thr-119, Arg-180, Gln-189, Gly-209, and Arg-210 contribute to the substrate site; that span reads DLKLHDIGNT. The Proton donor role is filled by Lys-67.

It belongs to the OMP decarboxylase family. Type 1 subfamily. Homodimer.

It catalyses the reaction orotidine 5'-phosphate + H(+) = UMP + CO2. The protein operates within pyrimidine metabolism; UMP biosynthesis via de novo pathway; UMP from orotate: step 2/2. Its function is as follows. Catalyzes the decarboxylation of orotidine 5'-monophosphate (OMP) to uridine 5'-monophosphate (UMP). This Methylorubrum extorquens (strain PA1) (Methylobacterium extorquens) protein is Orotidine 5'-phosphate decarboxylase.